A 216-amino-acid polypeptide reads, in one-letter code: Glycerol-3-phosphate acyltransferase (216 aa).

6 helical membrane passes run 3 to 23 (FPIF…YWIA), 48 to 68 (IGWK…MLPV), 82 to 102 (FQLL…FLGF), 112 to 132 (FGVF…VFWV), 142 to 162 (LGSI…TILL), and 166 to 186 (EVSY…ILTH).

It belongs to the PlsY family. Probably interacts with PlsX.

It localises to the cell inner membrane. It carries out the reaction an acyl phosphate + sn-glycerol 3-phosphate = a 1-acyl-sn-glycero-3-phosphate + phosphate. It functions in the pathway lipid metabolism; phospholipid metabolism. Functionally, catalyzes the transfer of an acyl group from acyl-phosphate (acyl-PO(4)) to glycerol-3-phosphate (G3P) to form lysophosphatidic acid (LPA). This enzyme utilizes acyl-phosphate as fatty acyl donor, but not acyl-CoA or acyl-ACP. This Leptospira interrogans serogroup Icterohaemorrhagiae serovar Lai (strain 56601) protein is Glycerol-3-phosphate acyltransferase.